We begin with the raw amino-acid sequence, 229 residues long: Potassium/proton antiporter CemA (229 aa).

Helical transmembrane passes span 6 to 26 (AFIP…ISLC), 107 to 127 (ILHF…SFWG), and 189 to 209 (ILSG…KYWI).

This sequence belongs to the CemA family.

Its subcellular location is the plastid. It is found in the chloroplast inner membrane. It carries out the reaction K(+)(in) + H(+)(out) = K(+)(out) + H(+)(in). Contributes to K(+)/H(+) antiport activity by supporting proton efflux to control proton extrusion and homeostasis in chloroplasts in a light-dependent manner to modulate photosynthesis. Prevents excessive induction of non-photochemical quenching (NPQ) under continuous-light conditions. Indirectly promotes efficient inorganic carbon uptake into chloroplasts. The chain is Potassium/proton antiporter CemA from Arabidopsis thaliana (Mouse-ear cress).